We begin with the raw amino-acid sequence, 1173 residues long: Fas-binding factor 1 (1173 aa).

Positions 17–168 (MALRTKKGLK…PSSSKTGLQY (152 aa)) are disordered. The span at 46–56 (KPAEPASHAKD) shows a compositional bias: basic and acidic residues. Residues 80 to 93 (AGADAEASSVSDAD) show a composition bias toward low complexity. Residue Ser-172 is modified to Phosphoserine. 2 disordered regions span residues 180-225 (LAGL…GDTP) and 241-566 (TTLG…SSRE). Over residues 206-216 (SPGAAAGQGPS) the composition is skewed to low complexity. Basic and acidic residues-rich tracts occupy residues 247 to 258 (DSPKAERKKTGD) and 287 to 299 (TGERREFQLDKKY). Polar residues-rich tracts occupy residues 331–345 (VASSEGRQSRRQSVS), 396–411 (SPVQKAQQEDSPMTPS), 468–477 (VISQKKSQNL), and 533–544 (TGSSMSWSQATT). Coiled-coil stretches lie at residues 617-742 (TAQL…QQAS), 808-917 (QQRE…MNKC), and 975-1057 (CELR…VQRQ). Residue Lys-1002 forms a Glycyl lysine isopeptide (Lys-Gly) (interchain with G-Cter in SUMO2) linkage. The disordered stretch occupies residues 1091–1124 (ASLPGLPPRVQGPAASSRDAVQAPASSSPQCSQP). Over residues 1110–1124 (AVQAPASSSPQCSQP) the composition is skewed to low complexity.

As to quaternary structure, interacts with PARD3. May interact with FAS cytoplasmic domain. Interacts with TRAPPC14. As to expression, broadly expressed.

It is found in the cytoplasm. It localises to the cytoskeleton. Its subcellular location is the microtubule organizing center. The protein resides in the centrosome. The protein localises to the centriole. It is found in the spindle pole. It localises to the cell junction. Its function is as follows. Keratin-binding protein required for epithelial cell polarization. Involved in apical junction complex (AJC) assembly via its interaction with PARD3. Required for ciliogenesis. This Mus musculus (Mouse) protein is Fas-binding factor 1 (Fbf1).